The following is a 168-amino-acid chain: Disulfide bond formation protein B 2 (168 aa).

Topologically, residues 1-14 (MSAPIGATRAERWT) are cytoplasmic. Residues 15 to 31 (LLAIGVASFELVAGALW) traverse the membrane as a helical segment. The Periplasmic segment spans residues 32–49 (IQLAWQEDPCPLCIIQRY). Residues C41 and C44 are joined by a disulfide bond. Residues 50–64 (LFLLIALFTFVAAAG) form a helical membrane-spanning segment. The Cytoplasmic portion of the chain corresponds to 65–69 (GRRVA). The helical transmembrane segment at 70 to 87 (LLRVLSLTTALAGAAVAV) threads the bilayer. The Periplasmic portion of the chain corresponds to 88 to 142 (RHIYVQAHPGFSCGFDALQPVIDSLPPAHWLPPVFKVGGLCETLYPPILGLSLPM). C100 and C128 form a disulfide bridge. The helical transmembrane segment at 143-161 (WALVGFSAIAVALGWRIRA) threads the bilayer. The Cytoplasmic segment spans residues 162–168 (QAVIRTA).

It belongs to the DsbB family.

The protein resides in the cell inner membrane. Required for disulfide bond formation in some periplasmic proteins. Acts by oxidizing the DsbA protein. The sequence is that of Disulfide bond formation protein B 2 from Burkholderia lata (strain ATCC 17760 / DSM 23089 / LMG 22485 / NCIMB 9086 / R18194 / 383).